The primary structure comprises 997 residues: Translation initiation factor IF-2 (997 aa).

The tract at residues 101–406 (ELAAEQAAAR…SRNQHQDRRH (306 aa)) is disordered. Low complexity-rich tracts occupy residues 116–185 (AEAV…QAEP) and 195–209 (AAPA…EPAK). Polar residues predominate over residues 231 to 242 (TELTSQTPTPVA). Low complexity predominate over residues 256 to 280 (AEPAAAPKTTAKPGEIRRAAAPAAP). Over residues 281–292 (DRAREEARRAAE) the composition is skewed to basic and acidic residues. The segment covering 385–394 (RAGGKGGRGG) has biased composition (gly residues). The tr-type G domain occupies 498-665 (PRAPVVTVMG…NVLLQAEILE (168 aa)). The tract at residues 507 to 514 (GHVDHGKT) is G1. Residue 507–514 (GHVDHGKT) participates in GTP binding. The segment at 532-536 (GITQH) is G2. Positions 553–556 (DTPG) are G3. Residues 553 to 557 (DTPGH) and 607 to 610 (NKID) each bind GTP. Positions 607-610 (NKID) are G4. Residues 643–645 (SAK) form a G5 region.

It belongs to the TRAFAC class translation factor GTPase superfamily. Classic translation factor GTPase family. IF-2 subfamily.

Its subcellular location is the cytoplasm. In terms of biological role, one of the essential components for the initiation of protein synthesis. Protects formylmethionyl-tRNA from spontaneous hydrolysis and promotes its binding to the 30S ribosomal subunits. Also involved in the hydrolysis of GTP during the formation of the 70S ribosomal complex. This Bordetella pertussis (strain Tohama I / ATCC BAA-589 / NCTC 13251) protein is Translation initiation factor IF-2.